The sequence spans 496 residues: Fibronectin type III and SPRY domain-containing protein 1 (496 aa).

Positions 4-99 (QREALRKIIK…ALESSEELLE (96 aa)) form a coiled coil. Residues 105 to 162 (LQAMDSEDFPQAAKQIKDGVTMAPAFRLSLKAKVSDNMSHLMVDFAQERQMLQALKFL) form the COS domain. Positions 164–268 (VPSAPVIDLA…EPVTLETPAF (105 aa)) constitute a Fibronectin type-III domain. A B30.2/SPRY domain is found at 268 to 477 (FMFRLDASTS…VTTGLQVPSA (210 aa)). The tract at residues 301–336 (KAREKDGKGRTASPINSPARGTPSPKRMPSGRGGRD) is disordered. Omega-N-methylarginine is present on residues R310 and R320.

As to quaternary structure, oligomerization is required for binding to microtubules. As to expression, highly expressed in brain tissues, including cerebellum, cerebral cortex, medulla, occipital pole, frontal lobe, temporal lobe and putamen. Lower expression in spinal cord.

The protein localises to the cytoplasm. It is found in the cytoskeleton. The protein resides in the microtubule organizing center. Its subcellular location is the centrosome. It localises to the nucleus. The protein localises to the cleavage furrow. Its function is as follows. May be involved in microtubule organization and stabilization. This chain is Fibronectin type III and SPRY domain-containing protein 1 (FSD1), found in Homo sapiens (Human).